A 231-amino-acid chain; its full sequence is Probable methylthioribulose-1-phosphate dehydratase (231 aa).

Cys90 provides a ligand contact to substrate. Zn(2+) is bound by residues His108 and His110. Residue Glu132 is the Proton donor/acceptor of the active site. His188 is a Zn(2+) binding site.

This sequence belongs to the aldolase class II family. MtnB subfamily. Zn(2+) is required as a cofactor.

Its subcellular location is the cytoplasm. The catalysed reaction is 5-(methylsulfanyl)-D-ribulose 1-phosphate = 5-methylsulfanyl-2,3-dioxopentyl phosphate + H2O. Its pathway is amino-acid biosynthesis; L-methionine biosynthesis via salvage pathway; L-methionine from S-methyl-5-thio-alpha-D-ribose 1-phosphate: step 2/6. In terms of biological role, catalyzes the dehydration of methylthioribulose-1-phosphate (MTRu-1-P) into 2,3-diketo-5-methylthiopentyl-1-phosphate (DK-MTP-1-P). The protein is Probable methylthioribulose-1-phosphate dehydratase of Anopheles gambiae (African malaria mosquito).